Here is a 128-residue protein sequence, read N- to C-terminus: Fluoride-specific ion channel FluC (128 aa).

A run of 4 helical transmembrane segments spans residues 5–25 (IVAI…LSLA), 35–55 (LGTL…AVVF), 67–87 (LFVI…SVEV), and 96–116 (FGWA…LTAL). Positions 75 and 78 each coordinate Na(+).

Belongs to the fluoride channel Fluc/FEX (TC 1.A.43) family.

The protein localises to the cell inner membrane. It carries out the reaction fluoride(in) = fluoride(out). Na(+) is not transported, but it plays an essential structural role and its presence is essential for fluoride channel function. Fluoride-specific ion channel. Important for reducing fluoride concentration in the cell, thus reducing its toxicity. The chain is Fluoride-specific ion channel FluC from Burkholderia orbicola (strain MC0-3).